The following is a 376-amino-acid chain: Probable inactive protein kinase At3g63330 (376 aa).

Positions 1 to 370 (MVERGPTVYL…VDEALQHPYF (370 aa)) constitute a Protein kinase domain.

The protein belongs to the protein kinase superfamily. Ser/Thr protein kinase family.

In Arabidopsis thaliana (Mouse-ear cress), this protein is Probable inactive protein kinase At3g63330.